The sequence spans 1233 residues: ATP-dependent helicase/nuclease subunit A (1233 aa).

Residues 3 to 474 (TKWTEEQKQA…ILLYKNFRSR (472 aa)) form the UvrD-like helicase ATP-binding domain. 24-31 (AAAGSGKT) is a binding site for ATP. One can recognise a UvrD-like helicase C-terminal domain in the interval 518–809 (VTGGAVELHL…RIMSIHKSKG (292 aa)). A disordered region spans residues 533 to 555 (VEEEVEEKEEEKNEEKDFEEEEE).

It belongs to the helicase family. AddA subfamily. In terms of assembly, heterodimer of AddA and AddB/RexB. The cofactor is Mg(2+).

It catalyses the reaction Couples ATP hydrolysis with the unwinding of duplex DNA by translocating in the 3'-5' direction.. The enzyme catalyses ATP + H2O = ADP + phosphate + H(+). Its function is as follows. The heterodimer acts as both an ATP-dependent DNA helicase and an ATP-dependent, dual-direction single-stranded exonuclease. Recognizes the chi site generating a DNA molecule suitable for the initiation of homologous recombination. The AddA nuclease domain is required for chi fragment generation; this subunit has the helicase and 3' -&gt; 5' nuclease activities. The protein is ATP-dependent helicase/nuclease subunit A of Thermoanaerobacter pseudethanolicus (strain ATCC 33223 / 39E) (Clostridium thermohydrosulfuricum).